We begin with the raw amino-acid sequence, 389 residues long: NAD-dependent protein deacetylase sirtuin-2 (389 aa).

The interval 1–34 is disordered; it reads MAEPDPSDPLETQAGKVQEAQDSDSDTEGGATGG. Ala-2 carries the post-translational modification N-acetylalanine. Phosphoserine is present on residues Ser-23 and Ser-25. Phosphothreonine is present on Thr-27. The Nuclear export signal signature appears at 41-51; that stretch reads LRNLFTQTLGL. Ser-53 carries the post-translational modification Phosphoserine. The Deacetylase sirtuin-type domain occupies 57 to 338; it reads RLLDELTLEG…LALADLLGWK (282 aa). NAD(+)-binding positions include 85–89 and 95–97; these read AGIST and DFR. Phosphoserine is present on Ser-100. NAD(+) is bound at residue 167-170; it reads QNID. Catalysis depends on His-187, which acts as the Proton acceptor. Residues Cys-195, Cys-200, Cys-221, and Cys-224 each contribute to the Zn(2+) site. Residues 262 to 263, 286 to 288, and Cys-324 each bind NAD(+); these read TS and NKE. Residues 350–389 are disordered; it reads ANIDAQSGSQAPNPSTTISPGKSPPPAKEAARTKEKEEQQ. The span at 353–369 shows a compositional bias: polar residues; that stretch reads DAQSGSQAPNPSTTISP. 2 positions are modified to phosphoserine: Ser-368 and Ser-372. Positions 378–389 are enriched in basic and acidic residues; the sequence is EAARTKEKEEQQ.

It belongs to the sirtuin family. Class I subfamily. As to quaternary structure, interacts with CDC20, FOXO3 and FZR1. Associates with microtubule in primary cortical mature neurons. Homotrimer. Interacts (via both phosphorylated, unphosphorylated, active or inactive forms) with HDAC6; the interaction is necessary for the complex to interact with alpha-tubulin, suggesting that these proteins belong to a large complex that deacetylates the cytoskeleton. Interacts with FOXO1; the interaction is disrupted upon serum-starvation or oxidative stress, leading to increased level of acetylated FOXO1 and induction of autophagy. Interacts with RELA; the interaction occurs in the cytoplasm and is increased in a TNF-alpha-dependent manner. Interacts with HOXA10; the interaction is direct. Interacts with YWHAB and YWHAG; the interactions occur in a AKT-dependent manner and increase SIRT2-dependent TP53 deacetylation. Interacts with MAPK1/ERK2 and MAPK3/ERK1; the interactions increase SIRT2 stability and deacetylation activity. Interacts (phosphorylated form) with KMT5A isoform 2; the interaction is direct, stimulates KMT5A-mediated methyltransferase activity on histone at 'Lys-20' (H4K20me1) and is increased in a H(2)O(2)-induced oxidative stress-dependent manner. Interacts with G6PD; the interaction is enhanced by H(2)O(2) treatment. Interacts with a G1/S-specific cyclin E-CDK2 complex. Interacts with AURKA, CDK5R1 (p35 form) and CDK5 and HIF1A. Interacts with the tRNA ligase SARS1; recruited to the VEGFA promoter via interaction with SARS1. Isoform 2 and isoform 4 associate with microtubules in primary cortical mature neurons. Interacts with BEX4; negatively regulates alpha-tubulin deacetylation by SIRT2. Requires Zn(2+) as cofactor. Phosphorylated at phosphoserine and phosphothreonine. Phosphorylated at Ser-368 by a mitotic kinase CDK1/cyclin B at the G2/M transition; phosphorylation regulates the delay in cell-cycle progression. Phosphorylated at Ser-368 by a mitotic kinase G1/S-specific cyclin E/Cdk2 complex; phosphorylation inactivates SIRT2-mediated alpha-tubulin deacetylation and thereby negatively regulates cell adhesion, cell migration and neurite outgrowth during neuronal differentiation. Phosphorylated by cyclin A/Cdk2 and p35-Cdk5 complexes and to a lesser extent by the cyclin D3/Cdk4 and cyclin B/Cdk1, in vitro. Dephosphorylated at Ser-368 by CDC14A and CDC14B around early anaphase. Post-translationally, acetylated by EP300; acetylation leads both to the decreased of SIRT2-mediated alpha-tubulin deacetylase activity and SIRT2-mediated down-regulation of TP53 transcriptional activity. In terms of processing, ubiquitinated. Isoform 1 is weakly expressed in the cortex at postnatal(P) days P1, P3 and P7, and increases progressively between P17 and older adult cortex. Isoform 1 is also expressed in heart, liver and skeletal muscle, weakly expressed in the striatum and spinal cord. Isoform 2 is not expressed in the cortex at P1, P3 and P7, and increases strongly and progressively between P17 and older adult cortex. Isoform 2 is also expressed in the heart, liver, striatum and spinal cord. Isoform 4 is weakly expressed in older adult cortex and spinal cords. Expressed in the cortex. Expressed in postnatal sciatic nerves during myelination and during remyelination after nerve injury. Expressed in neurons, oligodendrocytes, Schwann cells, Purkinje cells and in astrocytes of white matter. Strongly expressed in preadipocytes compared with differentiated adipocytes. Expressed in cerebellar granule cells. Expressed in the inner ear: in the cochlea, expressed in types I and V fibrocytes in the spiral ligament (SL) and slightly in stria vascularis (SV); in the organ of Corti, expressed in some supporting cells; in the crista ampullaris, expressed in spiral ganglion cells; also expressed in the endolymphatic sac (ES) epithelial cells (at protein level). Expressed in the brain, spinal cord, optic nerve and hippocampus. Strongly expressed in 6-8 week-old ovulated meiosis II oocytes and weakly expressed in 45-58 week-old ovulated meiosis II oocytes. Expressed in the cochlea, vestibule and acoustic nerve of the inner ear.

The protein localises to the nucleus. It localises to the cytoplasm. The protein resides in the perinuclear region. It is found in the perikaryon. Its subcellular location is the cytoskeleton. The protein localises to the cell projection. It localises to the growth cone. The protein resides in the myelin membrane. It is found in the microtubule organizing center. Its subcellular location is the centrosome. The protein localises to the spindle. It localises to the chromosome. The protein resides in the midbody. It is found in the centriole. The catalysed reaction is N(6)-acetyl-L-lysyl-[protein] + NAD(+) + H2O = 2''-O-acetyl-ADP-D-ribose + nicotinamide + L-lysyl-[protein]. It catalyses the reaction N(6)-tetradecanoyl-L-lysyl-[protein] + NAD(+) + H2O = 2''-O-tetradecanoyl-ADP-D-ribose + nicotinamide + L-lysyl-[protein]. It carries out the reaction N(6)-hexadecanoyl-L-lysyl-[protein] + NAD(+) + H2O = 2''-O-hexadecanoyl-ADP-D-ribose + nicotinamide + L-lysyl-[protein]. With respect to regulation, inhibited by Sirtinol, A3 and M15 small molecules. Inhibited by nicotinamide. Inhibited by a macrocyclic peptide inhibitor S2iL5. Inhibited by EP300-induced acetylation. Its function is as follows. NAD-dependent protein deacetylase, which deacetylates internal lysines on histone and alpha-tubulin as well as many other proteins such as key transcription factors. Participates in the modulation of multiple and diverse biological processes such as cell cycle control, genomic integrity, microtubule dynamics, cell differentiation, metabolic networks, and autophagy. Plays a major role in the control of cell cycle progression and genomic stability. Functions in the antephase checkpoint preventing precocious mitotic entry in response to microtubule stress agents, and hence allowing proper inheritance of chromosomes. Positively regulates the anaphase promoting complex/cyclosome (APC/C) ubiquitin ligase complex activity by deacetylating CDC20 and FZR1, then allowing progression through mitosis. Associates both with chromatin at transcriptional start sites (TSSs) and enhancers of active genes. Plays a role in cell cycle and chromatin compaction through epigenetic modulation of the regulation of histone H4 'Lys-20' methylation (H4K20me1) during early mitosis. Specifically deacetylates histone H4 at 'Lys-16' (H4K16ac) between the G2/M transition and metaphase enabling H4K20me1 deposition by KMT5A leading to ulterior levels of H4K20me2 and H4K20me3 deposition throughout cell cycle, and mitotic S-phase progression. Deacetylates KMT5A modulating KMT5A chromatin localization during the mitotic stress response. Also deacetylates histone H3 at 'Lys-57' (H3K56ac) during the mitotic G2/M transition. During oocyte meiosis progression, may deacetylate histone H4 at 'Lys-16' (H4K16ac) and alpha-tubulin, regulating spindle assembly and chromosome alignment by influencing microtubule dynamics and kinetochore function. Deacetylates histone H4 at 'Lys-16' (H4K16ac) at the VEGFA promoter and thereby contributes to regulate expression of VEGFA, a key regulator of angiogenesis. Deacetylates alpha-tubulin at 'Lys-40' and hence controls neuronal motility, oligodendroglial cell arbor projection processes and proliferation of non-neuronal cells. Phosphorylation at Ser-368 by a G1/S-specific cyclin E-CDK2 complex inactivates SIRT2-mediated alpha-tubulin deacetylation, negatively regulating cell adhesion, cell migration and neurite outgrowth during neuronal differentiation. Deacetylates PARD3 and participates in the regulation of Schwann cell peripheral myelination formation during early postnatal development and during postinjury remyelination. Involved in several cellular metabolic pathways. Plays a role in the regulation of blood glucose homeostasis by deacetylating and stabilizing phosphoenolpyruvate carboxykinase PCK1 activity in response to low nutrient availability. Acts as a key regulator in the pentose phosphate pathway (PPP) by deacetylating and activating the glucose-6-phosphate G6PD enzyme, and therefore, stimulates the production of cytosolic NADPH to counteract oxidative damage. Maintains energy homeostasis in response to nutrient deprivation as well as energy expenditure by inhibiting adipogenesis and promoting lipolysis. Attenuates adipocyte differentiation by deacetylating and promoting FOXO1 interaction to PPARG and subsequent repression of PPARG-dependent transcriptional activity. Plays a role in the regulation of lysosome-mediated degradation of protein aggregates by autophagy in neuronal cells. Deacetylates FOXO1 in response to oxidative stress or serum deprivation, thereby negatively regulating FOXO1-mediated autophagy. Deacetylates a broad range of transcription factors and co-regulators regulating target gene expression. Deacetylates transcriptional factor FOXO3 stimulating the ubiquitin ligase SCF(SKP2)-mediated FOXO3 ubiquitination and degradation. Deacetylates HIF1A and therefore promotes HIF1A degradation and inhibition of HIF1A transcriptional activity in tumor cells in response to hypoxia. Deacetylates RELA in the cytoplasm inhibiting NF-kappaB-dependent transcription activation upon TNF-alpha stimulation. Inhibits transcriptional activation by deacetylating p53/TP53 and EP300. Also deacetylates EIF5A. Functions as a negative regulator on oxidative stress-tolerance in response to anoxia-reoxygenation conditions. Plays a role as tumor suppressor. In addition to protein deacetylase activity, also has activity toward long-chain fatty acyl groups and mediates protein-lysine demyristoylation and depalmitoylation of target proteins, such as ARF6 and KRAS, thereby regulating their association with membranes. Functionally, deacetylates alpha-tubulin. The sequence is that of NAD-dependent protein deacetylase sirtuin-2 (Sirt2) from Mus musculus (Mouse).